Consider the following 208-residue polypeptide: Small ribosomal subunit protein uS4 (208 aa).

The S4 RNA-binding domain maps to 98–158 (SRLDNAVYRL…EKSRNMQVID (61 aa)).

Belongs to the universal ribosomal protein uS4 family. In terms of assembly, part of the 30S ribosomal subunit. Contacts protein S5. The interaction surface between S4 and S5 is involved in control of translational fidelity.

Functionally, one of the primary rRNA binding proteins, it binds directly to 16S rRNA where it nucleates assembly of the body of the 30S subunit. Its function is as follows. With S5 and S12 plays an important role in translational accuracy. In Desulfosudis oleivorans (strain DSM 6200 / JCM 39069 / Hxd3) (Desulfococcus oleovorans), this protein is Small ribosomal subunit protein uS4.